A 338-amino-acid chain; its full sequence is Ferrochelatase (338 aa).

Residues His-202 and Glu-283 each contribute to the Fe cation site.

The protein belongs to the ferrochelatase family.

The protein resides in the cytoplasm. The catalysed reaction is heme b + 2 H(+) = protoporphyrin IX + Fe(2+). It participates in porphyrin-containing compound metabolism; protoheme biosynthesis; protoheme from protoporphyrin-IX: step 1/1. Functionally, catalyzes the ferrous insertion into protoporphyrin IX. The protein is Ferrochelatase of Acinetobacter baumannii (strain ATCC 17978 / DSM 105126 / CIP 53.77 / LMG 1025 / NCDC KC755 / 5377).